We begin with the raw amino-acid sequence, 558 residues long: Dihydroxy-acid dehydratase (558 aa).

A [2Fe-2S] cluster-binding site is contributed by Cys49. Asp81 contributes to the Mg(2+) binding site. Cys122 lines the [2Fe-2S] cluster pocket. 2 residues coordinate Mg(2+): Asp123 and Lys124. Lys124 is subject to N6-carboxylysine. Cys194 is a binding site for [2Fe-2S] cluster. Residue Glu446 participates in Mg(2+) binding. Ser472 (proton acceptor) is an active-site residue.

This sequence belongs to the IlvD/Edd family. As to quaternary structure, homodimer. [2Fe-2S] cluster is required as a cofactor. Requires Mg(2+) as cofactor.

The enzyme catalyses (2R)-2,3-dihydroxy-3-methylbutanoate = 3-methyl-2-oxobutanoate + H2O. It carries out the reaction (2R,3R)-2,3-dihydroxy-3-methylpentanoate = (S)-3-methyl-2-oxopentanoate + H2O. It functions in the pathway amino-acid biosynthesis; L-isoleucine biosynthesis; L-isoleucine from 2-oxobutanoate: step 3/4. It participates in amino-acid biosynthesis; L-valine biosynthesis; L-valine from pyruvate: step 3/4. Functionally, functions in the biosynthesis of branched-chain amino acids. Catalyzes the dehydration of (2R,3R)-2,3-dihydroxy-3-methylpentanoate (2,3-dihydroxy-3-methylvalerate) into 2-oxo-3-methylpentanoate (2-oxo-3-methylvalerate) and of (2R)-2,3-dihydroxy-3-methylbutanoate (2,3-dihydroxyisovalerate) into 2-oxo-3-methylbutanoate (2-oxoisovalerate), the penultimate precursor to L-isoleucine and L-valine, respectively. In Synechococcus sp. (strain RCC307), this protein is Dihydroxy-acid dehydratase.